The following is a 568-amino-acid chain: MKVAVEGCCHGELDKIYESISYLENKDGVKVDLLLCCGDFQAVRNEGDMKCMAVPAKYRHMQTFYKYYSGEKKAPVLTIFIGGNHEASNHLQELPYGGWVAPNIYYLGYAGVIRYKGVRIGGLSGIFKSHDFKKGHFEFPPYNPETLRSVYHIRNIDVFKLKQIKMPIDIFMTHDWPRGIYHYGNTNALLRQKKFLRQEVESSTLGSPAAADLLEHLQPSYWFSAHLHVKFAALMQHEAKNNTAPKITKFLSLDKCLPHRDFLQIVEVADRPGSSEQLEYDPEWLAILKATDNLQKPTCNFWNPPQDNGLHSRWDFSASEEAMMEVVSDLSGDLCIPENFSLTVPPYDPSQPQPHALPAYSTNPQTTELCATLNLTDIYILAGQSGQIYGERGGKGATEEEDEEDSTGSADEPSDFPSDTSGLSSSYNPDEITIEDEWEEEEDGGVGCGEGKGMDAVVPEGQVGSQDSDRDSSPQRETAKRLILPAPCAKPKTEAPLHSLPRLSLPPPSACVSQGSSEEEGAFTAARVPKRTSGETTQSSAGQTGGTPQIKRRNQSIYTAVEDEESDS.

The a divalent metal cation site is built by Cys8, His10, Asp39, and Asn84. The tract at residues 124-154 (SGIFKSHDFKKGHFEFPPYNPETLRSVYHIR) is lariat recognition loop. His174, His226, and His228 together coordinate a divalent metal cation. The disordered stretch occupies residues 388 to 568 (IYGERGGKGA…TAVEDEESDS (181 aa)). Polar residues predominate over residues 417–428 (PSDTSGLSSSYN). The span at 432-444 (ITIEDEWEEEEDG) shows a compositional bias: acidic residues. Basic and acidic residues predominate over residues 467 to 480 (DSDRDSSPQRETAK). Phosphothreonine is present on Thr478. Low complexity predominate over residues 534-549 (GETTQSSAGQTGGTPQ). At Ser568 the chain carries Phosphoserine.

The protein belongs to the lariat debranching enzyme family. Requires Fe(2+) as cofactor. It depends on Zn(2+) as a cofactor. Mn(2+) serves as cofactor.

The protein resides in the nucleus. Active in presence of diverse metals including Fe(2+), Zn(2+), Mn(2+). Also activated by Ca(2+). Binds two metal cations in two adjacent alpha and beta metal-binding pockets. In terms of biological role, cleaves the 2'-5' phosphodiester linkage at the branch point of excised lariat intron RNA and converts them into linear molecules that can be subsequently degraded, thereby facilitating ribonucleotide turnover. Linked to its role in pre-mRNA processing mechanism, may also participate in retrovirus replication and have an antiviral cell-intrinsic defense function. In Danio rerio (Zebrafish), this protein is Lariat debranching enzyme (dbr1).